The following is a 172-amino-acid chain: MKESSRKQGAASPCAACKLLRRRCAQDCVFSPYFPADEPQKFANVHRVFGASNVNKMLQELPIHQRGDAVSSMVYEANARVRDPVYGCVGAISSLQQQIDVLQAQLALAQAEVVHLRVRQSTNFPGHGLCPDSPSSSGSPSSKQVSPQDNKGMFSHMDIVDEASLGESMWSC.

The LOB domain maps to 12–113 (SPCAACKLLR…AQLALAQAEV (102 aa)). The interval 125 to 152 (PGHGLCPDSPSSSGSPSSKQVSPQDNKG) is disordered. Positions 131–147 (PDSPSSSGSPSSKQVSP) are enriched in low complexity.

Belongs to the LOB domain-containing protein family. As to expression, expressed in young shoots, roots, stems, leaves and flowers.

The polypeptide is LOB domain-containing protein 4 (LBD4) (Arabidopsis thaliana (Mouse-ear cress)).